Consider the following 140-residue polypeptide: ATP synthase epsilon chain (140 aa).

This sequence belongs to the ATPase epsilon chain family. F-type ATPases have 2 components, CF(1) - the catalytic core - and CF(0) - the membrane proton channel. CF(1) has five subunits: alpha(3), beta(3), gamma(1), delta(1), epsilon(1). CF(0) has three main subunits: a, b and c.

Its subcellular location is the cell inner membrane. Produces ATP from ADP in the presence of a proton gradient across the membrane. This Yersinia enterocolitica serotype O:8 / biotype 1B (strain NCTC 13174 / 8081) protein is ATP synthase epsilon chain.